A 508-amino-acid chain; its full sequence is Aspartic proteinase A3 (508 aa).

The signal sequence occupies residues 1–25 (MGTRFQSFLLVFLLSCLILISTASC). Residues 26–69 (ERNGDGTIRIGLKKRKLDRSNRLASQLFLKNRGSHWSPKHYFRL) constitute a propeptide, activation peptide. Residues 87-505 (YYGDITIGTP…DYGKGRVGFA (419 aa)) form the Peptidase A1 domain. The active site involves aspartate 105. 2 disulfide bridges follow: cysteine 118/cysteine 124 and cysteine 283/cysteine 287. Aspartate 292 is an active-site residue. A Saposin B-type domain is found at 317-419 (IVSRECKAVV…AELCDHIPTQ (103 aa)). Intrachain disulfides connect cysteine 322/cysteine 413, cysteine 347/cysteine 385, cysteine 353/cysteine 382, and cysteine 427/cysteine 464. Asparagine 399 carries N-linked (GlcNAc...) asparagine glycosylation.

The protein belongs to the peptidase A1 family. Expressed in petals, carpels and seed pods.

The protein localises to the secreted. Its function is as follows. Involved in the processing and degradation of storage proteins. The protein is Aspartic proteinase A3 (APA3) of Arabidopsis thaliana (Mouse-ear cress).